We begin with the raw amino-acid sequence, 82 residues long: RNA-binding protein Hfq (82 aa).

Positions 11-71 (DTFLNHVRKT…ISTIMPGAPI (61 aa)) constitute a Sm domain.

Belongs to the Hfq family. Homohexamer.

In terms of biological role, RNA chaperone that binds small regulatory RNA (sRNAs) and mRNAs to facilitate mRNA translational regulation in response to envelope stress, environmental stress and changes in metabolite concentrations. Also binds with high specificity to tRNAs. In Nitrobacter winogradskyi (strain ATCC 25391 / DSM 10237 / CIP 104748 / NCIMB 11846 / Nb-255), this protein is RNA-binding protein Hfq.